A 198-amino-acid polypeptide reads, in one-letter code: Na(+)-translocating NADH-quinone reductase subunit E (198 aa).

The next 6 helical transmembrane spans lie at 11 to 31 (SIFI…FLAV), 39 to 59 (FGLG…NNLV), 77 to 97 (FLNF…LEMV), 110 to 130 (GIFL…SFMV), 140 to 160 (IVYG…LAGI), and 176 to 196 (LGIT…FSGV).

Belongs to the NqrDE/RnfAE family. In terms of assembly, composed of six subunits; NqrA, NqrB, NqrC, NqrD, NqrE and NqrF.

Its subcellular location is the cell inner membrane. The catalysed reaction is a ubiquinone + n Na(+)(in) + NADH + H(+) = a ubiquinol + n Na(+)(out) + NAD(+). In terms of biological role, NQR complex catalyzes the reduction of ubiquinone-1 to ubiquinol by two successive reactions, coupled with the transport of Na(+) ions from the cytoplasm to the periplasm. NqrA to NqrE are probably involved in the second step, the conversion of ubisemiquinone to ubiquinol. The polypeptide is Na(+)-translocating NADH-quinone reductase subunit E (Aliivibrio salmonicida (strain LFI1238) (Vibrio salmonicida (strain LFI1238))).